The sequence spans 188 residues: Putative pre-16S rRNA nuclease (188 aa).

The interval 144–188 is disordered; sequence HAPGRVVAGPKGRRKARHRGQGGTGTEQQADAGGRARPHATEGKG. Residues 154–163 are compositionally biased toward basic residues; it reads KGRRKARHRG.

The protein belongs to the YqgF nuclease family.

It localises to the cytoplasm. Functionally, could be a nuclease involved in processing of the 5'-end of pre-16S rRNA. This is Putative pre-16S rRNA nuclease from Kineococcus radiotolerans (strain ATCC BAA-149 / DSM 14245 / SRS30216).